Consider the following 574-residue polypeptide: MWALRGCRSGSRWGQGAALLLLLLGVPPRGLALPPLRYSHAGICPNDMNPNLWVDAQSTCKRECETDQECETYEKCCPNVCGTKSCVAARYMDVKGKKGPVGMPKEATCDHFMCLQQGSECDIWDGQPVCKCRDRCEKEPSFTCASDGLTYYNRCYMDAEACSKGITLAVVTCRYHFTWPNTSPSPPETTVHPTTAPPETPGLDATAPALLNHPAHQSVTVGETVSFLCDVVGRPRPEITWEKQLEDRENVVMRPNHVRGNVVVTNIAQLVIYNAQPQDAGIYTCTARNAAGVLRADFPLSVVSGGQASATAESSPNGTALPAAECLKPPDSDDCGEEQTRWYFDAQANNCLTFTFGHCHRNRNHFETYEACMLACMSGSLAMCSLPALQGPCKAYVPRWAYNSQTGQCQSFVYGGCEGNGNNFESREDCEESCPFPRGNQRCRACKPRQKLVTSFCRSDFVILGRISELTEEPDSGRALVTVDEVLKDEKMGLKFLGQEPLEVTLLHMDWTCPCPNVTVGEAPLIIMGEVDGGMAVLRPDSFVGASSTRRARKLREVMHKKTCDVLKDFPGLQ.

Positions 1 to 32 (MWALRGCRSGSRWGQGAALLLLLLGVPPRGLA) are cleaved as a signal peptide. A WAP domain is found at 37-90 (RYSHAGICPNDMNPNLWVDAQSTCKRECETDQECETYEKCCPNVCGTKSCVAAR). 17 disulfide bridges follow: cysteine 44–cysteine 77, cysteine 60–cysteine 81, cysteine 64–cysteine 76, cysteine 70–cysteine 86, cysteine 132–cysteine 162, cysteine 136–cysteine 155, cysteine 144–cysteine 173, cysteine 229–cysteine 285, cysteine 326–cysteine 376, cysteine 335–cysteine 359, cysteine 351–cysteine 372, cysteine 384–cysteine 434, cysteine 393–cysteine 417, cysteine 409–cysteine 430, cysteine 443–cysteine 513, cysteine 446–cysteine 515, and cysteine 457–cysteine 564. The Kazal-like domain occupies 124-175 (WDGQPVCKCRDRCEKEPSFTCASDGLTYYNRCYMDAEACSKGITLAVVTCRY). Residues 208-301 (PALLNHPAHQ…GVLRADFPLS (94 aa)) form the Ig-like C2-type domain. 2 consecutive BPTI/Kunitz inhibitor domains span residues 326 to 376 (CLKP…MLAC) and 384 to 434 (CSLP…EESC). An NTR domain is found at 443-564 (CRACKPRQKL…LREVMHKKTC (122 aa)). A glycan (N-linked (GlcNAc...) asparagine) is linked at asparagine 517.

Belongs to the WFIKKN family. As to quaternary structure, interacts with both mature and propeptide myostatin/MSTN.

It localises to the secreted. In terms of biological role, protease-inhibitor that contains multiple distinct protease inhibitor domains. Probably has serine protease- and metalloprotease-inhibitor activity. Inhibits the biological activity of mature myostatin, but not activin. The polypeptide is WAP, Kazal, immunoglobulin, Kunitz and NTR domain-containing protein 2 (WFIKKN2) (Bos taurus (Bovine)).